Reading from the N-terminus, the 378-residue chain is Putative F-box protein At3g24580 (378 aa).

Residues 1-47 enclose the F-box domain; the sequence is MTKMSNLPNDLAEEVLSRVSLTSLRNVRLTCKDWNTLSKGESFAKNH.

The sequence is that of Putative F-box protein At3g24580 from Arabidopsis thaliana (Mouse-ear cress).